Reading from the N-terminus, the 449-residue chain is Tubulin alpha-2 chain (449 aa).

Q11 lines the GTP pocket. K40 carries the post-translational modification N6-acetyllysine. GTP-binding residues include S140, G144, T145, T179, N206, and N228. E254 is an active-site residue.

Belongs to the tubulin family. In terms of assembly, dimer of alpha and beta chains. A typical microtubule is a hollow water-filled tube with an outer diameter of 25 nm and an inner diameter of 15 nM. Alpha-beta heterodimers associate head-to-tail to form protofilaments running lengthwise along the microtubule wall with the beta-tubulin subunit facing the microtubule plus end conferring a structural polarity. Microtubules usually have 13 protofilaments but different protofilament numbers can be found in some organisms and specialized cells. Post-translationally, acetylation of alpha chains at Lys-40 stabilizes microtubules and affects affinity and processivity of microtubule motors. This modification has a role in multiple cellular functions, ranging from cell motility, cell cycle progression or cell differentiation to intracellular trafficking and signaling.

The protein localises to the cytoplasm. The protein resides in the cytoskeleton. The enzyme catalyses GTP + H2O = GDP + phosphate + H(+). Functionally, tubulin is the major constituent of microtubules, a cylinder consisting of laterally associated linear protofilaments composed of alpha- and beta-tubulin heterodimers. Microtubules grow by the addition of GTP-tubulin dimers to the microtubule end, where a stabilizing cap forms. Below the cap, tubulin dimers are in GDP-bound state, owing to GTPase activity of alpha-tubulin. The polypeptide is Tubulin alpha-2 chain (Stylonychia lemnae (Ciliate)).